The chain runs to 435 residues: Ribulose bisphosphate carboxylase/oxygenase activase 2, chloroplastic (435 aa).

The N-terminal 56 residues, 1–56 (MAAAYSTVGAVNRAPLSLNGSGARASLVPSTAFFGSSLKKSAAKFPKASSGNFKIV), are a transit peptide targeting the chloroplast. 165-172 (GGKGQGKS) lines the ATP pocket.

Belongs to the RuBisCO activase family.

It localises to the plastid. The protein localises to the chloroplast stroma. Functionally, activation of RuBisCO (ribulose-1,5-bisphosphate carboxylase/oxygenase; EC 4.1.1.39) involves the ATP-dependent carboxylation of the epsilon-amino group of lysine leading to a carbamate structure. The chain is Ribulose bisphosphate carboxylase/oxygenase activase 2, chloroplastic (RCA2) from Larrea tridentata (Creosote bush).